The chain runs to 230 residues: Sugar fermentation stimulation protein homolog (230 aa).

This sequence belongs to the SfsA family.

In Thermoanaerobacter pseudethanolicus (strain ATCC 33223 / 39E) (Clostridium thermohydrosulfuricum), this protein is Sugar fermentation stimulation protein homolog.